The sequence spans 162 residues: Phospholipase A and acyltransferase 3 (162 aa).

Residues 1–133 (MRAPIPEPKP…VARSDQVRDV (133 aa)) are Cytoplasmic-facing. The region spanning 13 to 129 (LIEIFRPFYR…LRYGVARSDQ (117 aa)) is the LRAT domain. Residues histidine 23 and histidine 35 contribute to the active site. Cysteine 113 (acyl-thioester intermediate) is an active-site residue. Residues 134-154 (IIAASVAGMGLAAMSLIGVMF) form a helical membrane-spanning segment. At 155-162 (SRNKRQKQ) the chain is on the lumenal side.

The protein belongs to the H-rev107 family. Interacts with PPP2R1A; this interaction might decrease PP2A activity. As to expression, widely expressed. Low expression, if any, in hematopoietic cells and thymus. In testis, confined to round spermatids. Expressed in normal ovarian epithelial cells. Down-regulated in some ovarian carcinomas and testicular germ cell tumors. Highly expressed in white adipose tissue.

Its subcellular location is the cell membrane. It localises to the cytoplasm. It is found in the cytosol. The protein resides in the perinuclear region. The protein localises to the peroxisome membrane. Its subcellular location is the mitochondrion membrane. It localises to the nucleus envelope. It is found in the lysosome membrane. The protein resides in the endoplasmic reticulum membrane. It catalyses the reaction a 1,2-diacyl-sn-glycero-3-phosphocholine + H2O = a 1-acyl-sn-glycero-3-phosphocholine + a fatty acid + H(+). It carries out the reaction a 1,2-diacyl-sn-glycero-3-phosphocholine + H2O = a 2-acyl-sn-glycero-3-phosphocholine + a fatty acid + H(+). The catalysed reaction is 1,2-dihexadecanoyl-sn-glycero-3-phosphocholine + H2O = 1-hexadecanoyl-sn-glycero-3-phosphocholine + hexadecanoate + H(+). The enzyme catalyses 1,2-dihexadecanoyl-sn-glycero-3-phosphocholine + H2O = 2-hexadecanoyl-sn-glycero-3-phosphocholine + hexadecanoate + H(+). It catalyses the reaction 1-hexadecanoyl-2-(9Z-octadecenoyl)-sn-glycero-3-phosphocholine + H2O = 2-(9Z-octadecenoyl)-sn-glycero-3-phosphocholine + hexadecanoate + H(+). It carries out the reaction 1-hexadecanoyl-2-(9Z-octadecenoyl)-sn-glycero-3-phosphocholine + H2O = 1-hexadecanoyl-sn-glycero-3-phosphocholine + (9Z)-octadecenoate + H(+). The catalysed reaction is 1-hexadecanoyl-2-(5Z,8Z,11Z,14Z-eicosatetraenoyl)-sn-glycero-3-phosphocholine + H2O = 1-hexadecanoyl-sn-glycero-3-phosphocholine + (5Z,8Z,11Z,14Z)-eicosatetraenoate + H(+). The enzyme catalyses 1-hexadecanoyl-2-(5Z,8Z,11Z,14Z-eicosatetraenoyl)-sn-glycero-3-phosphocholine + H2O = 2-(5Z,8Z,11Z,14Z)-eicosatetraenoyl-sn-glycero-3-phosphocholine + hexadecanoate + H(+). It catalyses the reaction 1-hexadecanoyl-2-(9Z,12Z-octadecadienoyl)-sn-glycero-3-phosphoethanolamine + H2O = 1-hexadecanoyl-sn-glycero-3-phosphoethanolamine + (9Z,12Z)-octadecadienoate + H(+). It carries out the reaction 1-hexadecanoyl-2-(9Z,12Z-octadecadienoyl)-sn-glycero-3-phosphoethanolamine + H2O = 2-(9Z,12Z)-octadecadienoyl-sn-glycero-3-phosphoethanolamine + hexadecanoate + H(+). The catalysed reaction is 1-hexadecanoyl-2-(5Z,8Z,11Z,14Z-eicosatetraenoyl)-sn-glycero-3-phosphoethanolamine + H2O = 1-hexadecanoyl-sn-glycero-3-phosphoethanolamine + (5Z,8Z,11Z,14Z)-eicosatetraenoate + H(+). The enzyme catalyses 1-hexadecanoyl-2-(5Z,8Z,11Z,14Z-eicosatetraenoyl)-sn-glycero-3-phosphoethanolamine + H2O = 2-(5Z,8Z,11Z,14Z)-eicosatetraenoyl-sn-glycero-3-phosphoethanolamine + hexadecanoate + H(+). It catalyses the reaction 1-hexanoyl-2-acyl-sn-glycero-3-phosphocholine + H2O = hexanoate + a 2-acyl-sn-glycero-3-phosphocholine + H(+). It carries out the reaction 1-hexanoyl-2-acyl-sn-glycero-3-phosphocholine + H2O = 1-hexanoyl-sn-glycero-3-phosphocholine + a fatty acid + H(+). The catalysed reaction is 1,2-diheptadecanoyl-sn-glycero-3-phosphoethanolamine + 1-(9Z-octadecenoyl)-2-hexadecanoyl-sn-glycero-3-phosphocholine = 1,2-diheptadecanoyl-sn-glycero-3-phospho-N-hexadecanoyl-ethanolamine + 1-(9Z-octadecenoyl)-sn-glycero-3-phosphocholine + H(+). The enzyme catalyses 1,2-diheptadecanoyl-sn-glycero-3-phosphoethanolamine + 1-(9Z-octadecenoyl)-2-hexadecanoyl-sn-glycero-3-phosphocholine = 1,2-diheptadecanoyl-sn-glycero-3-phospho-N-(9Z-octadecenoyl)-ethanolamine + 2-hexadecanoyl-sn-glycero-3-phosphocholine + H(+). It catalyses the reaction 1,2-dihexanoyl-sn-glycero-3-phosphoethanolamine + 2-heptanoyl-sn-glycero-3-phosphocholine = hexanoyl-sn-glycero-3-phosphoethanolamine + 1-hexanoyl-2-heptanoyl-sn-glycero-3-phosphocholine. It carries out the reaction 1-hexadecanoyl-2-octadecanoyl-sn-glycero-3-phosphocholine + H2O = octadecanoate + 1-hexadecanoyl-sn-glycero-3-phosphocholine + H(+). The catalysed reaction is 1-hexadecanoyl-2-octadecanoyl-sn-glycero-3-phosphocholine + H2O = 2-octadecanoyl-sn-glycero-3-phosphocholine + hexadecanoate + H(+). The enzyme catalyses 1-octadecanoyl-2-hexadecanoyl-sn-glycero-3-phosphocholine + H2O = 1-octadecanoyl-sn-glycero-3-phosphocholine + hexadecanoate + H(+). It catalyses the reaction 1-octadecanoyl-2-hexadecanoyl-sn-glycero-3-phosphocholine + H2O = 2-hexadecanoyl-sn-glycero-3-phosphocholine + octadecanoate + H(+). It carries out the reaction 1-hexadecanoyl-2-(9Z,12Z-octadecadienoyl)-sn-glycero-3-phosphocholine + H2O = (9Z,12Z)-octadecadienoate + 1-hexadecanoyl-sn-glycero-3-phosphocholine + H(+). The catalysed reaction is 1-hexadecanoyl-2-(9Z,12Z-octadecadienoyl)-sn-glycero-3-phosphocholine + H2O = 2-(9Z,12Z-octadecadienoyl)-sn-glycero-3-phosphocholine + hexadecanoate + H(+). The enzyme catalyses 1,2-di-(9Z-octadecenoyl)-sn-glycero-3-phosphocholine + H2O = 2-(9Z-octadecenoyl)-sn-glycero-3-phosphocholine + (9Z)-octadecenoate + H(+). It catalyses the reaction 1,2-dihexadecanoyl-sn-glycero-3-phosphocholine + H2O = hexadecanoyl-sn-glycero-3-phosphocholine + hexadecanoate + H(+). It carries out the reaction 1,2-di-(9Z-octadecenoyl)-sn-glycero-3-phosphocholine + H2O = 1-(9Z-octadecenoyl)-sn-glycero-3-phosphocholine + (9Z)-octadecenoate + H(+). The catalysed reaction is 1,2-di-(9Z-octadecenoyl)-sn-glycero-3-phosphoethanolamine + 1,2-dihexadecanoyl-sn-glycero-3-phosphocholine = hexadecanoyl-sn-glycero-3-phosphocholine + N-hexadecanoyl-1,2-di-(9Z-octadecenoyl)-sn-glycero-3-phosphoethanolamine + H(+). The enzyme catalyses 1,2-di-(9Z,12Z-octadecadienoyl)-sn-glycero-3-phosphocholine + H2O = 1-(9Z,12Z)-octadecadienoyl-sn-glycero-3-phosphocholine + (9Z,12Z)-octadecadienoate + H(+). Functionally, exhibits both phospholipase A1/2 and acyltransferase activities. Shows phospholipase A1 (PLA1) and A2 (PLA2) activity, catalyzing the calcium-independent release of fatty acids from the sn-1 or sn-2 position of glycerophospholipids. For most substrates, PLA1 activity is much higher than PLA2 activity. Shows O-acyltransferase activity,catalyzing the transfer of a fatty acyl group from glycerophospholipid to the hydroxyl group of lysophospholipid. Shows N-acyltransferase activity, catalyzing the calcium-independent transfer of a fatty acyl group at the sn-1 position of phosphatidylcholine (PC) and other glycerophospholipids to the primary amine of phosphatidylethanolamine (PE), forming N-acylphosphatidylethanolamine (NAPE), which serves as precursor for N-acylethanolamines (NAEs). Exhibits high N-acyltransferase activity and low phospholipase A1/2 activity. Required for complete organelle rupture and degradation that occur during eye lens terminal differentiation, when fiber cells that compose the lens degrade all membrane-bound organelles in order to provide lens with transparency to allow the passage of light. Organelle membrane degradation is probably catalyzed by the phospholipase activity. (Microbial infection) Acts as a host factor for picornaviruses: required during early infection to promote viral genome release into the cytoplasm. May act as a cellular sensor of membrane damage at sites of virus entry, which relocalizes to sites of membrane rupture upon virus unfection. Facilitates safe passage of the RNA away from LGALS8, enabling viral genome translation by host ribosome. May also be involved in initiating pore formation, increasing pore size or in maintaining pores for genome delivery. The lipid-modifying enzyme activity is required for this process. The protein is Phospholipase A and acyltransferase 3 of Homo sapiens (Human).